The primary structure comprises 147 residues: Basic phospholipase A2 beta-bungarotoxin A1 chain (147 aa).

A signal peptide spans 1-19; the sequence is MYPAHLLILSAVCVSLLGA. The propeptide occupies 20 to 27; the sequence is ANIPPHPL. 6 disulfides stabilise this stretch: Cys54-Cys146, Cys56-Cys72, Cys71-Cys127, Cys78-Cys120, Cys88-Cys113, and Cys106-Cys118. Positions 55, 57, and 59 each coordinate Ca(2+). The active site involves His75. Asp76 contributes to the Ca(2+) binding site. Residue Asp121 is part of the active site.

The protein belongs to the phospholipase A2 family. Group I subfamily. D49 sub-subfamily. In terms of assembly, heterodimer; disulfide-linked. The A chains have phospholipase A2 activity and the B chains show homology with the basic protease inhibitors. It depends on Ca(2+) as a cofactor. As to expression, expressed by the venom gland.

It localises to the secreted. It catalyses the reaction a 1,2-diacyl-sn-glycero-3-phosphocholine + H2O = a 1-acyl-sn-glycero-3-phosphocholine + a fatty acid + H(+). Functionally, snake venom phospholipase A2 (PLA2) that inhibits neuromuscular transmission by blocking acetylcholine release from the nerve termini. PLA2 catalyzes the calcium-dependent hydrolysis of the 2-acyl groups in 3-sn-phosphoglycerides. This chain is Basic phospholipase A2 beta-bungarotoxin A1 chain, found in Bungarus caeruleus (Indian krait).